The primary structure comprises 266 residues: MRVALKIAYDGTKFHGFQRQPNVRTIEGEILRALKDAGIEFENFKSASRTDRGVSARGNVIALSTEDDRIKNPMVLNSRMSDVWIWGIAEVPEDFHPRFWANTKVYRYYLPSLGMNIKKMKECSLLFLGTHDFSAFSRVDGRDTIRSIDRIEIWEKCNVVVVEIEGKSFLWEMVRRIVSALVLCSQGVLAEERIVEMLNGKFEKSRKVPPAPPEGLLLWDIKYENVEFQIDNASLKKFQREIVERFKLHASLSALYEDLILNEQKI.

Catalysis depends on D51, which acts as the Nucleophile. Position 106 (Y106) interacts with substrate.

It belongs to the tRNA pseudouridine synthase TruA family.

The catalysed reaction is uridine(38/39/40) in tRNA = pseudouridine(38/39/40) in tRNA. Its function is as follows. Formation of pseudouridine at positions 38, 39 and 40 in the anticodon stem and loop of transfer RNAs. The protein is tRNA pseudouridine synthase A of Pyrococcus furiosus (strain ATCC 43587 / DSM 3638 / JCM 8422 / Vc1).